The sequence spans 252 residues: Triosephosphate isomerase (252 aa).

9-11 (NWK) is a substrate binding site. Histidine 95 acts as the Electrophile in catalysis. Residue glutamate 167 is the Proton acceptor of the active site. Residues glycine 173, serine 211, and 232–233 (GG) each bind substrate.

This sequence belongs to the triosephosphate isomerase family. As to quaternary structure, homodimer.

It localises to the cytoplasm. The catalysed reaction is D-glyceraldehyde 3-phosphate = dihydroxyacetone phosphate. It functions in the pathway carbohydrate biosynthesis; gluconeogenesis. It participates in carbohydrate degradation; glycolysis; D-glyceraldehyde 3-phosphate from glycerone phosphate: step 1/1. Involved in the gluconeogenesis. Catalyzes stereospecifically the conversion of dihydroxyacetone phosphate (DHAP) to D-glyceraldehyde-3-phosphate (G3P). This is Triosephosphate isomerase from Marinobacter nauticus (strain ATCC 700491 / DSM 11845 / VT8) (Marinobacter aquaeolei).